A 30-amino-acid polypeptide reads, in one-letter code: MVKAVTVLNSSEGPHGIVYFAQEGDGPTTV.

The protein belongs to the Cu-Zn superoxide dismutase family. Requires Cu cation as cofactor. The cofactor is Zn(2+). Expressed in fruits, leaves and pollen grains.

The protein resides in the cytoplasm. It is found in the endoplasmic reticulum. The enzyme catalyses 2 superoxide + 2 H(+) = H2O2 + O2. Its activity is regulated as follows. Inhibited by KCN and H(2)O(2). Destroys radicals which are normally produced within the cells and which are toxic to biological systems. Probably involved in the protection against oxidative stress during pollen development. This is Superoxide dismutase [Cu-Zn] 1 from Olea europaea (Common olive).